The following is a 1478-amino-acid chain: ATP-binding cassette transporter abc2 (1478 aa).

The Vacuolar segment spans residues 1 to 25 (MVLEQDLDPFVGGNWMNSAYKGFTF). Residues 26–46 (LSATWLAPNIYLLISGCLQYF) form a helical membrane-spanning segment. Topologically, residues 47 to 65 (YEVRKRSHYFHFRRFWTIW) are cytoplasmic. The chain crosses the membrane as a helical span at residues 66–85 (LKSLVIMVLLFTHIYDCYKT). N86 is a glycosylation site (N-linked (GlcNAc...) asparagine). At 86 to 90 (NESVW) the chain is on the vacuolar side. Residues 91 to 104 (NVLSIITYFLALFL) traverse the membrane as a helical segment. The Cytoplasmic portion of the chain corresponds to 105–116 (HVVEQPTLRIPM). A helical membrane pass occupies residues 117 to 137 (ASLLMFWLFKFLASALVLLLR). Residues 138 to 154 (PNYTMFPMLNVVPSITF) are Vacuolar-facing. N-linked (GlcNAc...) asparagine glycosylation is present at N139. Residues 155–175 (FCSLVCLLAEIYVPPANRVWY) traverse the membrane as a helical segment. The Cytoplasmic portion of the chain corresponds to 176-259 (PDDAAELEET…KKSSLYMWGV (84 aa)). A helical transmembrane segment spans residues 260–280 (LFLNHWKLTVVIIVLKLVQDV). In terms of domain architecture, ABC transmembrane type-1 1 spans 268–557 (TVVIIVLKLV…LPIVVSSVLE (290 aa)). The Vacuolar portion of the chain corresponds to 281-310 (VAFIQPNLIRKIVIFVSSYSSEHPQPPQVG). A helical membrane pass occupies residues 311-331 (FSLAIAMFLTNVVQTALLQQY). Over 332–387 (FQLGMVLGMRWRSELITAIYRKSLRLSSAARQSRSVGDIVNYMSVDTQKVCDLTMF) the chain is Cytoplasmic. A helical membrane pass occupies residues 388–408 (LFVIVSGPFQIVLALTNLYHL). Topologically, residues 409–411 (VGY) are vacuolar. A helical membrane pass occupies residues 412–432 (GALSGAFVTFLLFPCNVVIAS). The Cytoplasmic segment spans residues 433 to 495 (IFKRFQNRQM…MLKKIGIVNT (63 aa)). The helical transmembrane segment at 496–516 (IGNFTWLFAPILVSAATFGTF) threads the bilayer. Over 517–539 (IVLYGKTRVLSVDIVFACLSLFN) the chain is Vacuolar. A helical transmembrane segment spans residues 540–560 (LLQFPLTMLPIVVSSVLEASV). Over 561–910 (AISRIYGFLT…VKWKVYWTYF (350 aa)) the chain is Cytoplasmic. The ABC transporter 1 domain maps to 593–821 (LEIKKGTFSW…PDSQLFQLLS (229 aa)). ATP is bound at residue 631–638 (GKVGMGKS). Residues 828-867 (TASSTGADTPLSRSQSVITSSTDVTSSASRSSDTVSNYPK) are disordered. Residues 829–840 (ASSTGADTPLSR) are compositionally biased toward polar residues. A phosphoserine mark is found at S839, S843, and S863. A compositionally biased stretch (low complexity) spans 841–863 (SQSVITSSTDVTSSASRSSDTVS). Residues 911-931 (KACSLFLIFLYFLFIIGGIGM) form a helical membrane-spanning segment. In terms of domain architecture, ABC transmembrane type-1 2 spans 918-1202 (IFLYFLFIIG…VVRQSVDVET (285 aa)). Residues 932 to 968 (NVGTNVWLKHWSEVNTQLGYNPKPYFYLGIYTLFGLL) are Vacuolar-facing. A helical transmembrane segment spans residues 969-990 (SCALISLSSLTITVFCAIKSCR). Residues 991 to 1033 (YLHDSMVKAVLRAPMSFFETTPTGRILNRFSSDVYRVDEVISR) are Cytoplasmic-facing. Residues 1034-1054 (VFMFFFRNLFQIVFVLAVICY) traverse the membrane as a helical segment. A topological domain (vacuolar) is located at residue S1055. Residues 1056-1076 (SPMFMILIVPLFFLYRYNQVY) form a helical membrane-spanning segment. Residues 1077–1147 (YTQTSRELKR…SSNRWQAIRV (71 aa)) lie on the Cytoplasmic side of the membrane. The chain crosses the membrane as a helical span at residues 1148-1168 (EAIGALVVFSSAFFGVLSAVR). Over 1169–1172 (GNPN) the chain is Vacuolar. A helical transmembrane segment spans residues 1173–1193 (SGLVGLSLSYAVQITQSLTFV). At 1194 to 1478 (VRQSVDVETN…YSLAKESGLI (285 aa)) the chain is on the cytoplasmic side. One can recognise an ABC transporter 2 domain in the interval 1239 to 1473 (IKFDHYSVRY…KASLFYSLAK (235 aa)). 1273–1280 (GRTGAGKS) contributes to the ATP binding site.

Belongs to the ABC transporter superfamily. ABCC family. Conjugate transporter (TC 3.A.1.208) subfamily.

The protein localises to the vacuole membrane. Functionally, involved in vacuolar sequestration of glutathione S-conjugates. Together with abc4, required for accumulation of a red pigment (ade pigment) in the vacuole of a mutant affected in the adenine biosynthetic pathway. The chain is ATP-binding cassette transporter abc2 (abc2) from Schizosaccharomyces pombe (strain 972 / ATCC 24843) (Fission yeast).